The chain runs to 449 residues: Probable phosphoglucosamine mutase (449 aa).

Residue Ser-96 is the Phosphoserine intermediate of the active site. 4 residues coordinate Mg(2+): Ser-96, Asp-233, Asp-235, and Asp-237. At Ser-96 the chain carries Phosphoserine.

This sequence belongs to the phosphohexose mutase family. Requires Mg(2+) as cofactor. Post-translationally, activated by phosphorylation.

It carries out the reaction alpha-D-glucosamine 1-phosphate = D-glucosamine 6-phosphate. Catalyzes the conversion of glucosamine-6-phosphate to glucosamine-1-phosphate. Does not display phosphoglucomutase (PGM) or phosphomannomutase (PMM) activities. The protein is Probable phosphoglucosamine mutase (glmM) of Thermococcus kodakarensis (strain ATCC BAA-918 / JCM 12380 / KOD1) (Pyrococcus kodakaraensis (strain KOD1)).